Consider the following 149-residue polypeptide: Ubiquitin-conjugating enzyme E2 pex4 (149 aa).

Residues 1-149 form the UBC core domain; it reads MAARLMKEYK…ARMYTRLYGC (149 aa). The active-site Glycyl thioester intermediate is Cys-86.

It belongs to the ubiquitin-conjugating enzyme family.

It catalyses the reaction S-ubiquitinyl-[E1 ubiquitin-activating enzyme]-L-cysteine + [E2 ubiquitin-conjugating enzyme]-L-cysteine = [E1 ubiquitin-activating enzyme]-L-cysteine + S-ubiquitinyl-[E2 ubiquitin-conjugating enzyme]-L-cysteine.. Its pathway is protein modification; protein ubiquitination. Catalyzes the covalent attachment of ubiquitin to other proteins. Essential for peroxisome biogenesis. In Dictyostelium discoideum (Social amoeba), this protein is Ubiquitin-conjugating enzyme E2 pex4 (pex4).